A 259-amino-acid chain; its full sequence is Complement factor D (259 aa).

An N-terminal signal peptide occupies residues 1–21 (MADRSGHLAALILLGAAVCVA). Positions 22–26 (QPRGR) are cleaved as a propeptide — activation peptide. In terms of domain architecture, Peptidase S1 spans 27-254 (ILGGQEAKSH…YVAWIDGVMA (228 aa)). Residues C52 and C68 are joined by a disulfide bond. Catalysis depends on charge relay system residues H67 and D115. 3 disulfide bridges follow: C149-C215, C180-C196, and C205-C230. The active-site Charge relay system is S209. Residues 224-228 (TSGSR) form a self-inhibitor loop region.

The protein belongs to the peptidase S1 family. CFD is activated by the removal of 5 residues at the N-terminus, named activation peptide, by the MASP-3 isoform of MASP1.

It is found in the secreted. The catalysed reaction is Selective cleavage of Arg-|-Lys bond in complement factor B when in complex with complement subcomponent C3b or with cobra venom factor.. Circulates in plasma in a mature but self-inhibited form. Activated by factor B (CFB), which displaces the self-inhibition loop. Associates with CFB complexed with complement C3b. Its function is as follows. Serine protease that initiates the alternative pathway of the complement system, a cascade of proteins that leads to phagocytosis and breakdown of pathogens and signaling that strengthens the adaptive immune system. In contrast to other complement pathways (classical, lectin and GZMK) that are directly activated by pathogens or antigen-antibody complexes, the alternative complement pathway is initiated by the spontaneous hydrolysis of complement C3. The alternative complement pathway acts as an amplification loop that enhances complement activation by mediating the formation of C3 and C5 convertases. Activated CFD cleaves factor B (CFB) when the latter is complexed with complement C3b, activating the C3 convertase of the alternative pathway. The sequence is that of Complement factor D (CFD) from Sus scrofa (Pig).